The primary structure comprises 421 residues: 4-hydroxy-3-methylbut-2-en-1-yl diphosphate synthase (flavodoxin) (421 aa).

The tract at residues 1 to 20 (MHDAVTRPTPPSDATSWPRR) is disordered. The [4Fe-4S] cluster site is built by cysteine 311, cysteine 314, cysteine 357, and glutamate 364.

Belongs to the IspG family. [4Fe-4S] cluster serves as cofactor.

The enzyme catalyses (2E)-4-hydroxy-3-methylbut-2-enyl diphosphate + oxidized [flavodoxin] + H2O + 2 H(+) = 2-C-methyl-D-erythritol 2,4-cyclic diphosphate + reduced [flavodoxin]. It participates in isoprenoid biosynthesis; isopentenyl diphosphate biosynthesis via DXP pathway; isopentenyl diphosphate from 1-deoxy-D-xylulose 5-phosphate: step 5/6. Converts 2C-methyl-D-erythritol 2,4-cyclodiphosphate (ME-2,4cPP) into 1-hydroxy-2-methyl-2-(E)-butenyl 4-diphosphate. The sequence is that of 4-hydroxy-3-methylbut-2-en-1-yl diphosphate synthase (flavodoxin) from Stenotrophomonas maltophilia (strain R551-3).